Reading from the N-terminus, the 104-residue chain is Large ribosomal subunit protein bL21 (104 aa).

The protein belongs to the bacterial ribosomal protein bL21 family. Part of the 50S ribosomal subunit. Contacts protein L20.

Its function is as follows. This protein binds to 23S rRNA in the presence of protein L20. This chain is Large ribosomal subunit protein bL21, found in Endomicrobium trichonymphae.